We begin with the raw amino-acid sequence, 646 residues long: Secretogranin-1 (646 aa).

A signal peptide spans 1–20 (MQPAALLGLLGATVVAAVSS). A disulfide bond links cysteine 36 and cysteine 57. The span at 67-90 (ELKNEEKSENENTRFEVRLLRDPA) shows a compositional bias: basic and acidic residues. Residues 67 to 483 (ELKNEEKSEN…GKQYAPHHIT (417 aa)) form a disordered region. Serine 74 is subject to Phosphoserine. Phosphothreonine is present on residues threonine 79 and threonine 92. Phosphoserine is present on residues serine 93, serine 99, serine 100, and serine 104. An O-linked (Xyl...) (chondroitin sulfate) serine glycan is attached at serine 93. Threonine 113 carries an O-linked (GalNAc...) threonine glycan. Basic and acidic residues-rich tracts occupy residues 119 to 128 (SGGHSRERAG) and 137 to 173 (KEAK…ERLS). Residues serine 123, serine 146, and serine 168 each carry the phosphoserine modification. Polar residues predominate over residues 182-191 (AFLNQRNQTP). Threonine 190 carries an O-linked (GalNAc...) threonine glycan. Serine 205 is subject to Phosphoserine. Basic and acidic residues predominate over residues 208 to 228 (GLEKSHSRERSSQESGEETKS). Residue serine 222 is glycosylated (O-linked (Xyl...) (chondroitin sulfate) serine). The segment covering 260 to 270 (RHSRPRHHHGR) has biased composition (basic residues). A phosphoserine mark is found at serine 276, serine 277, and serine 295. Tyrosine 315 is subject to Sulfotyrosine. The segment covering 340-361 (GRGEHQALRRPSEESLEQENKR) has biased composition (basic and acidic residues). A phosphoserine mark is found at serine 351 and serine 354. Tyrosine 374 is subject to Phosphotyrosine. Residues serine 375 and serine 378 each carry the phosphoserine modification. Residues 406–425 (TDEKRFLGETHHRVQESQRD) are compositionally biased toward basic and acidic residues. Tyrosine 441 bears the Sulfotyrosine mark. Composition is skewed to basic and acidic residues over residues 442 to 451 (GEEKGEEAAR) and 459 to 472 (DPRD…EARL). Glutamine 476 bears the Pyrrolidone carboxylic acid; in secretogranin-1(476-566) mark. Phosphoserine occurs at positions 502, 503, and 514. Position 535 is a sulfotyrosine (tyrosine 535). A Pyrrolidone carboxylic acid; in peptide BAM-1745 modification is found at glutamine 567. Serine 584 carries the phosphoserine modification. The segment at 588–620 (PDFYDSEEQMSPQHTAENEEEKAGQGVLTEEEE) is disordered. Tyrosine 591 carries the sulfotyrosine modification. Residues serine 593 and serine 598 each carry the phosphoserine modification. Glutamine 634 bears the Pyrrolidone carboxylic acid; in Secretolytin; partial mark.

This sequence belongs to the chromogranin/secretogranin protein family. In terms of assembly, interacts with ITPR1 in the secretory granules. O-glycosylated by the trisaccharide, GalNAc-Gal-NeuAc, on 2 sites in the N-terminal. May be glycated. In terms of processing, extensively phosphorylated. Post-translationally, differentially processed on numerous sites throughout the sequence depending on tissue type.

Its subcellular location is the cytoplasmic vesicle. It localises to the secretory vesicle membrane. It is found in the secreted. In terms of biological role, secretogranin-1 is a neuroendocrine secretory granule protein, which may be the precursor for other biologically active peptides. The 16 pairs of basic AA distributed throughout its sequence may be used as proteolytic cleavage sites. Functionally, secretolytin has antibacterial activity. The polypeptide is Secretogranin-1 (CHGB) (Bos taurus (Bovine)).